Consider the following 1279-residue polypeptide: Myosin-1 (1279 aa).

The span at 1–12 (MAIVKRGGRTRA) shows a compositional bias: basic residues. Residues 1-25 (MAIVKRGGRTRAKQQQAPAKVNNGL) form a disordered region. In terms of domain architecture, Myosin motor spans 48–736 (VGVSDLTLLS…TLFALEDMRD (689 aa)). 141–148 (GESGAGKT) lines the ATP pocket. The residue at position 371 (S371) is a Phosphoserine. The segment at 419 to 502 (SIGILDIYGF…PGLFAALNDS (84 aa)) is actin-binding. IQ domains lie at 740–760 (HNMAARIQRAWRRYIKRKEDA) and 761–786 (AKTIQRAWRMKNHGNQFEQFRDYGNS). Positions 794–984 (RRRFSMLGSR…SGTVTVNQGL (191 aa)) constitute a TH1 domain. Composition is skewed to polar residues over residues 980–989 (VNQGLPPTSK) and 1018–1027 (AFQSQPTASY). 4 disordered regions span residues 980 to 1001 (VNQGLPPTSKNPKRPRAKLGKV), 1014 to 1132 (LAQP…PKHP), 1189 to 1216 (SPSASAATQSYAPTTASSNPVSTASSNT), and 1253 to 1279 (LADALKKRQGVTRDDSDAEDDDDDDDW). Low complexity-rich tracts occupy residues 1038–1056 (TQLYATQHQPQQPQVPTRT) and 1067–1095 (STQTAAQVSTLPQAARKPAAPARPAKKIA). The segment covering 1116–1126 (APPPPPPPPAL) has biased composition (pro residues). The SH3 domain occupies 1129 to 1189 (PKHPTYRAMY…PIDYLQEESS (61 aa)). Polar residues predominate over residues 1189–1209 (SPSASAATQSYAPTTASSNPV). A compositionally biased stretch (acidic residues) spans 1268–1279 (SDAEDDDDDDDW).

Belongs to the TRAFAC class myosin-kinesin ATPase superfamily. Myosin family. Post-translationally, phosphorylation of the TEDS site (Ser-371) is required for the polarization of the actin cytoskeleton. Phosphorylation probably activates the myosin-I ATPase activity.

It is found in the cytoplasm. It localises to the cytoskeleton. The protein resides in the actin patch. In terms of biological role, type-I myosin implicated in the organization of the actin cytoskeleton. Required for proper actin cytoskeleton polarization. At the cell cortex, assembles in patch-like structures together with proteins from the actin-polymerizing machinery and promotes actin assembly. Functions as actin nucleation-promoting factor (NPF) for the Arp2/3 complex. The polypeptide is Myosin-1 (MYO1) (Lodderomyces elongisporus (strain ATCC 11503 / CBS 2605 / JCM 1781 / NBRC 1676 / NRRL YB-4239) (Yeast)).